A 346-amino-acid chain; its full sequence is Haptoglobin (346 aa).

The first 18 residues, 1–18 (MRALGAVVTLLLWGQLFA), serve as a signal peptide directing secretion. Residues 31 to 87 (DSCPKPPEIENGYVEHLVRYRCQHYRLRTEGDGVYTLNSEKQWVNTAAGERLPECEA) enclose the Sushi domain. Disulfide bonds link cysteine 52–cysteine 85, cysteine 89–cysteine 206, cysteine 249–cysteine 280, and cysteine 291–cysteine 321. One can recognise a Peptidase S1 domain in the interval 102 to 344 (IIGGSLDAKG…FLDWIQETMA (243 aa)). N-linked (GlcNAc...) asparagine glycosylation is found at asparagine 147 and asparagine 181. The interaction with CD163 stretch occupies residues 258–263 (VPEKEG).

This sequence belongs to the peptidase S1 family. In terms of assembly, tetramer of two alpha and two beta chains; disulfide-linked. The hemoglobin/haptoglobin complex is composed of a haptoglobin dimer bound to two hemoglobin alpha-beta dimers. Interacts with CD163. Interacts with ERGIC3. In terms of tissue distribution, expressed by the liver and secreted in plasma.

The protein resides in the secreted. In terms of biological role, as a result of hemolysis, hemoglobin is found to accumulate in the kidney and is secreted in the urine. Haptoglobin captures, and combines with free plasma hemoglobin to allow hepatic recycling of heme iron and to prevent kidney damage. Haptoglobin also acts as an antioxidant, has antibacterial activity and plays a role in modulating many aspects of the acute phase response. Hemoglobin/haptoglobin complexes are rapidly cleared by the macrophage CD163 scavenger receptor expressed on the surface of liver Kupfer cells through an endocytic lysosomal degradation pathway. The sequence is that of Haptoglobin (HP) from Mesocricetus auratus (Golden hamster).